A 434-amino-acid chain; its full sequence is Histidinol dehydrogenase (434 aa).

Residues Tyr-130, Gln-191, and Asn-214 each contribute to the NAD(+) site. Residues Ser-237, Gln-259, and His-262 each contribute to the substrate site. Residues Gln-259 and His-262 each contribute to the Zn(2+) site. Catalysis depends on proton acceptor residues Glu-327 and His-328. His-328, Asp-361, Glu-415, and His-420 together coordinate substrate. Zn(2+) is bound at residue Asp-361. His-420 is a binding site for Zn(2+).

This sequence belongs to the histidinol dehydrogenase family. Zn(2+) is required as a cofactor.

It catalyses the reaction L-histidinol + 2 NAD(+) + H2O = L-histidine + 2 NADH + 3 H(+). It functions in the pathway amino-acid biosynthesis; L-histidine biosynthesis; L-histidine from 5-phospho-alpha-D-ribose 1-diphosphate: step 9/9. Catalyzes the sequential NAD-dependent oxidations of L-histidinol to L-histidinaldehyde and then to L-histidine. The sequence is that of Histidinol dehydrogenase from Cereibacter sphaeroides (strain ATCC 17023 / DSM 158 / JCM 6121 / CCUG 31486 / LMG 2827 / NBRC 12203 / NCIMB 8253 / ATH 2.4.1.) (Rhodobacter sphaeroides).